Reading from the N-terminus, the 48-residue chain is Large ribosomal subunit protein bL33B (48 aa).

This sequence belongs to the bacterial ribosomal protein bL33 family.

The sequence is that of Large ribosomal subunit protein bL33B (rpmG 2) from Mycoplasmoides gallisepticum (strain R(low / passage 15 / clone 2)) (Mycoplasma gallisepticum).